Here is a 694-residue protein sequence, read N- to C-terminus: Elongation factor G (694 aa).

The region spanning 8–287 (EDYRNFGIMA…AVVEFLPAPT (280 aa)) is the tr-type G domain. Residues 17 to 24 (AHIDAGKT), 86 to 90 (DTPGH), and 140 to 143 (NKMD) each bind GTP.

It belongs to the TRAFAC class translation factor GTPase superfamily. Classic translation factor GTPase family. EF-G/EF-2 subfamily.

The protein resides in the cytoplasm. Functionally, catalyzes the GTP-dependent ribosomal translocation step during translation elongation. During this step, the ribosome changes from the pre-translocational (PRE) to the post-translocational (POST) state as the newly formed A-site-bound peptidyl-tRNA and P-site-bound deacylated tRNA move to the P and E sites, respectively. Catalyzes the coordinated movement of the two tRNA molecules, the mRNA and conformational changes in the ribosome. This Brucella abortus (strain S19) protein is Elongation factor G.